We begin with the raw amino-acid sequence, 175 residues long: Protein UPS1, mitochondrial (175 aa).

Positions M1–E80 are required for mitochondrial targeting. A PRELI/MSF1 domain is found at V2–N172. A 1,2-diacyl-sn-glycero-3-phosphate is bound by residues Y26, K58, K148, and N152.

Belongs to the slowmo family. In terms of assembly, interacts with MDM35. Found associated with a 170 kDa complex.

The protein localises to the mitochondrion inner membrane. Its subcellular location is the mitochondrion intermembrane space. Its function is as follows. Required for maintenance of normal mitochondrial morphology. Required for PCP1-dependent processing of MGM1. The UPS1:MDM35 complex mediates the transfer of phosphatidic acid (PA) between liposomes and probably functions as a PA transporter across the mitochondrion intermembrane space. Phosphatidic acid release requires dissociation of the UPS1:MDM35 complex. Phosphatidic acid import is required for cardiolipin (CL) synthesis in the mitochondrial inner membrane. With UPS2, controls the level of cardiolipin in mitochondria. Cardiolipin is a unique phospholipid with four fatty acid chains and is present mainly in the mitochondrial inner membrane where it stabilizes the electron transport chain supercomplex between complexes III and IV through direct interaction of their subunits. In Saccharomyces cerevisiae (strain ATCC 204508 / S288c) (Baker's yeast), this protein is Protein UPS1, mitochondrial (UPS1).